Consider the following 353-residue polypeptide: Stachydrine N-demethylase reductase subunit Stc4 (353 aa).

The region spanning 11 to 114 (SDAEPLECVT…IGPAGKFSIV (104 aa)) is the FAD-binding FR-type domain. The 2Fe-2S ferredoxin-type domain occupies 269 to 353 (AEIAFALSGV…KPLRRVSVEA (85 aa)). [2Fe-2S] cluster is bound by residues Cys-303, Cys-308, Cys-311, and Cys-341.

The protein in the N-terminal section; belongs to the FAD-binding oxidoreductase type 6 family. The system is probably composed of an oxygenase subunit (Stc2) and two reductase subunits (Stc3 and Stc4). Requires FAD as cofactor. [2Fe-2S] cluster is required as a cofactor.

Reductase involved in the catabolism of stachydrine (L-proline betaine), a source of carbon and nitrogen. Part of a Rieske-type oxygenase system that catalyzes the demethylation of stachydrine to produce N-methyl-L-proline (monomethylproline). This subunit is probably involved in the transfer of electrons from NAD(P)H to the catalytic subunit Stc2. This Rhizobium meliloti (strain 1021) (Ensifer meliloti) protein is Stachydrine N-demethylase reductase subunit Stc4.